The following is a 175-amino-acid chain: Outer membrane protein assembly factor BamE (175 aa).

The signal sequence occupies residues 1 to 21 (MQNTKLLLTSFTFVGLLALAG). Residue C22 is the site of N-palmitoyl cysteine attachment. C22 carries S-diacylglycerol cysteine lipidation. 2 disordered regions span residues 117–147 (ALLG…KPGS) and 156–175 (IDNV…TSPQ).

It belongs to the BamE family. As to quaternary structure, part of the Bam complex.

The protein resides in the cell outer membrane. Functionally, part of the outer membrane protein assembly complex, which is involved in assembly and insertion of beta-barrel proteins into the outer membrane. May have a structural role in maintaining the cell envelope integrity. In Pseudomonas fluorescens, this protein is Outer membrane protein assembly factor BamE.